A 221-amino-acid polypeptide reads, in one-letter code: uncharacterized protein (221 aa).

Helical transmembrane passes span 33–55, 70–92, 99–121, 125–147, 154–176, and 186–208; these read YFLL…ISYI, FGYR…QKIV, LEML…FIII, YGAY…YTLL, YFND…SFWI, and IISM…ITLI.

It localises to the cell membrane. This is an uncharacterized protein from Aquifex aeolicus (strain VF5).